Here is a 1046-residue protein sequence, read N- to C-terminus: Hemoglobin-haptoglobin-binding protein A (1046 aa).

Positions 1-24 are cleaved as a signal peptide; the sequence is MTNFRLNLLAYSVMLGLTAGVAYA. Tandem repeats lie at residues 26–29, 30–33, 34–37, and 38–41. The 4 X 4 AA tandem repeats of Q-P-T-N stretch occupies residues 26–41; the sequence is QPTNQPTNQPTNQPTN. A TonB box motif is present at residues 51 to 58; it reads EQINVLGS. The TBDR plug domain occupies 61-188; sequence HNDNTPPKIA…LGGSVSFDTK (128 aa). In terms of domain architecture, TBDR beta-barrel spans 196 to 1046; it reads NKNYYASYKR…NYRMSVQFEF (851 aa). A TonB C-terminal box motif is present at residues 1029–1046; that stretch reads NRFYAPGRNYRMSVQFEF.

The protein belongs to the TonB-dependent receptor family. Hemoglobin/haptoglobin binding protein subfamily.

The protein resides in the cell outer membrane. Functionally, acts as a receptor for the hemoglobin/haptoglobin complex of the human host and is required for heme uptake. Does not bind hemoglobin alone. The protein is Hemoglobin-haptoglobin-binding protein A (hhuA) of Haemophilus influenzae.